A 124-amino-acid polypeptide reads, in one-letter code: Small ribosomal subunit protein uS12 (124 aa).

Positions 1–24 are disordered; it reads MTTINQLVRKPRQATTYKSASPAL. The residue at position 89 (Asp89) is a 3-methylthioaspartic acid.

This sequence belongs to the universal ribosomal protein uS12 family. As to quaternary structure, part of the 30S ribosomal subunit. Contacts proteins S8 and S17. May interact with IF1 in the 30S initiation complex.

In terms of biological role, with S4 and S5 plays an important role in translational accuracy. Functionally, interacts with and stabilizes bases of the 16S rRNA that are involved in tRNA selection in the A site and with the mRNA backbone. Located at the interface of the 30S and 50S subunits, it traverses the body of the 30S subunit contacting proteins on the other side and probably holding the rRNA structure together. The combined cluster of proteins S8, S12 and S17 appears to hold together the shoulder and platform of the 30S subunit. This Xanthomonas axonopodis pv. citri (strain 306) protein is Small ribosomal subunit protein uS12.